The chain runs to 191 residues: MSEEKQTAEQVEAAEQEEVTEQAEQAASQEQHEETAGQEEALQHQIDELQGLLDEKENKLLRVQADFENYKRRSRLEMEAAQKYRSQNVVTEILPALDNFERALQVEAESEQTKSLLQGMEMVRRQLMDALEKEGVEAIEAVGQEFDPNLHQAVMQVEDENFGSNIVIEELQKGYKLKDRVIRPSMVKVNQ.

A disordered region spans residues 1 to 49 (MSEEKQTAEQVEAAEQEEVTEQAEQAASQEQHEETAGQEEALQHQIDEL). Positions 12–21 (EAAEQEEVTE) are enriched in acidic residues. A compositionally biased stretch (basic and acidic residues) spans 30–49 (EQHEETAGQEEALQHQIDEL).

It belongs to the GrpE family. As to quaternary structure, homodimer.

It is found in the cytoplasm. Participates actively in the response to hyperosmotic and heat shock by preventing the aggregation of stress-denatured proteins, in association with DnaK and GrpE. It is the nucleotide exchange factor for DnaK and may function as a thermosensor. Unfolded proteins bind initially to DnaJ; upon interaction with the DnaJ-bound protein, DnaK hydrolyzes its bound ATP, resulting in the formation of a stable complex. GrpE releases ADP from DnaK; ATP binding to DnaK triggers the release of the substrate protein, thus completing the reaction cycle. Several rounds of ATP-dependent interactions between DnaJ, DnaK and GrpE are required for fully efficient folding. This chain is Protein GrpE, found in Bacillus velezensis (strain DSM 23117 / BGSC 10A6 / LMG 26770 / FZB42) (Bacillus amyloliquefaciens subsp. plantarum).